Here is a 128-residue protein sequence, read N- to C-terminus: 3-aminoacrylate deaminase RutC (128 aa).

The protein belongs to the RutC family. Homotrimer.

The catalysed reaction is (Z)-3-aminoacrylate + H2O + H(+) = 3-oxopropanoate + NH4(+). Involved in pyrimidine catabolism. Catalyzes the deamination of 3-aminoacrylate to malonic semialdehyde, a reaction that can also occur spontaneously. RutC may facilitate the reaction and modulate the metabolic fitness, rather than catalyzing essential functions. In Escherichia coli O103:H2 (strain 12009 / EHEC), this protein is 3-aminoacrylate deaminase RutC.